Here is an 82-residue protein sequence, read N- to C-terminus: Cytochrome b559 subunit alpha (82 aa).

The helical transmembrane segment at 22–36 threads the bilayer; sequence VIHAITLPSIFLAGF. Residue His-24 coordinates heme.

This sequence belongs to the PsbE/PsbF family. As to quaternary structure, heterodimer of an alpha subunit and a beta subunit. PSII is composed of 1 copy each of membrane proteins PsbA, PsbB, PsbC, PsbD, PsbE, PsbF, PsbH, PsbI, PsbJ, PsbK, PsbL, PsbM, PsbT, PsbX, PsbY, PsbZ, Psb30/Ycf12, peripheral proteins PsbO, CyanoQ (PsbQ), PsbU, PsbV and a large number of cofactors. It forms dimeric complexes. Requires heme b as cofactor.

The protein localises to the cellular thylakoid membrane. Functionally, this b-type cytochrome is tightly associated with the reaction center of photosystem II (PSII). PSII is a light-driven water:plastoquinone oxidoreductase that uses light energy to abstract electrons from H(2)O, generating O(2) and a proton gradient subsequently used for ATP formation. It consists of a core antenna complex that captures photons, and an electron transfer chain that converts photonic excitation into a charge separation. In Synechococcus sp. (strain WH7803), this protein is Cytochrome b559 subunit alpha.